We begin with the raw amino-acid sequence, 199 residues long: NAD(P)H dehydrogenase (quinone) (199 aa).

Positions 4–190 constitute a Flavodoxin-like domain; sequence VLVLYYSAYG…GGARYQGKVI (187 aa). FMN contacts are provided by residues 10–15 and 78–80; these read SAYGHI and TRF. NAD(+) is bound at residue tyrosine 12. Tryptophan 98 is a substrate binding site. Residues 113–119 and histidine 134 contribute to the FMN site; that span reads STASQHG.

The protein belongs to the WrbA family. FMN is required as a cofactor.

The catalysed reaction is a quinone + NADH + H(+) = a quinol + NAD(+). The enzyme catalyses a quinone + NADPH + H(+) = a quinol + NADP(+). The sequence is that of NAD(P)H dehydrogenase (quinone) from Rhodopseudomonas palustris (strain BisB18).